The sequence spans 404 residues: Adenylosuccinate synthetase (404 aa).

GTP contacts are provided by residues 12–18 (GDEGKGK) and 40–42 (GHT). Residue Asp-13 is the Proton acceptor of the active site. Mg(2+) is bound by residues Asp-13 and Gly-40. IMP contacts are provided by residues 13–16 (DEGK), 38–41 (NAGH), Thr-121, Arg-135, Gln-213, Thr-228, and Arg-296. Residue His-41 is the Proton donor of the active site. 292–298 (TTTGRAR) is a substrate binding site. Residues Arg-298, 324–326 (KMD), and 389–391 (SCG) contribute to the GTP site.

Belongs to the adenylosuccinate synthetase family. In terms of assembly, homodimer. Mg(2+) serves as cofactor.

The protein resides in the cytoplasm. The catalysed reaction is IMP + L-aspartate + GTP = N(6)-(1,2-dicarboxyethyl)-AMP + GDP + phosphate + 2 H(+). Its pathway is purine metabolism; AMP biosynthesis via de novo pathway; AMP from IMP: step 1/2. Plays an important role in the de novo pathway of purine nucleotide biosynthesis. Catalyzes the first committed step in the biosynthesis of AMP from IMP. The chain is Adenylosuccinate synthetase from Deinococcus geothermalis (strain DSM 11300 / CIP 105573 / AG-3a).